The chain runs to 79 residues: Apolipoprotein C-II (79 aa).

An N-terminal signal peptide occupies residues 1 to 21 (MDLKVVAVSFLLLVLCSEAAG). The interval 45–52 (GVEKLRDI) is lipid binding. Residues 56-79 (SVDAVGTYTSILTDQLYHWWCGEQ) form a lipoprotein lipase cofactor region.

It belongs to the apolipoprotein C2 family. Proapolipoprotein C-II is synthesized as a sialic acid containing glycoprotein which is subsequently desialylated prior to its proteolytic processing. In terms of processing, proapolipoprotein C-II, the major form found in plasma undergoes proteolytic cleavage of its N-terminal hexapeptide to generate apolipoprotein C-II, which occurs as the minor form in plasma.

The protein resides in the secreted. Functionally, component of chylomicrons, very low-density lipoproteins (VLDL), low-density lipoproteins (LDL), and high-density lipoproteins (HDL) in plasma. Plays an important role in lipoprotein metabolism as an activator of lipoprotein lipase. Both proapolipoprotein C-II and apolipoprotein C-II can activate lipoprotein lipase. The protein is Apolipoprotein C-II (APOC2) of Alligator mississippiensis (American alligator).